Consider the following 551-residue polypeptide: Cleavage and polyadenylation specificity factor subunit 6 (551 aa).

A necessary for interaction with NXF1 region spans residues 1-213 (MADGVDHIDI…RGRFPGAVPG (213 aa)). Positions 81-161 (IALYIGNLTW…QNPVVTPCNK (81 aa)) constitute an RRM domain. Residues 81–161 (IALYIGNLTW…QNPVVTPCNK (81 aa)) are necessary for interaction with NUDT21/CPSF5. Residues 81-161 (IALYIGNLTW…QNPVVTPCNK (81 aa)) form a necessary for nuclear paraspeckles localization region. At T157 the chain carries Phosphothreonine. Polar residues predominate over residues 169–180 (MQSRKTTQSGQM). Disordered regions lie at residues 169–411 (MQSR…PLSE) and 477–551 (LHGI…YRHR). Residues 202–206 (RGRGR) carry the GAR motif. A compositionally biased stretch (low complexity) spans 207–219 (FPGAVPGGDRFPG). 3 stretches are compositionally biased toward pro residues: residues 220–265 (PAGP…PLAG), 285–366 (GQPP…PPPT), and 377–388 (GPPPTDPYGRPP). Positions 389-404 (PYDRGDYGPPGREMDT) are enriched in basic and acidic residues. A phosphothreonine mark is found at T404 and T407. Residues 404–551 (TARTPLSEAE…RDREREYRHR (148 aa)) form a sufficient for nuclear speckle localization region. The necessary for RNA-binding stretch occupies residues 405-551 (ARTPLSEAEF…RDREREYRHR (147 aa)). Residues 481-551 (ESKSYGSGSR…RDREREYRHR (71 aa)) are necessary for interaction with SRSF3, SRSF7 and TRA2B/SFRS10. A compositionally biased stretch (basic and acidic residues) spans 489–503 (SRRERSRERDHSRSR). The interval 490–551 (RRERSRERDH…RDREREYRHR (62 aa)) is arg/Ser-rich domain. 5 positions are modified to phosphoserine: S494, S500, S511, S513, and S525. A compositionally biased stretch (basic residues) spans 504–514 (EKSRRHKSRSR). Residues 510–551 (KSRSRDRHDDYYRERSRERERHRDRDRDRDRERDREREYRHR) are sufficient for nuclear targeting. The segment covering 515 to 551 (DRHDDYYRERSRERERHRDRDRDRDRERDREREYRHR) has biased composition (basic and acidic residues).

This sequence belongs to the RRM CPSF6/7 family. As to quaternary structure, component of the cleavage factor Im (CFIm) complex which is a heterotetramer composed of two subunits of NUDT21/CPSF5 and two subunits of CPSF6 or CPSF7 or a heterodimer of CPSF6 and CPSF7. The cleavage factor Im (CFIm) complex associates with the CPSF and CSTF complexes to promote the assembly of the core mRNA 3'-processing machinery. Associates with the exon junction complex (EJC). Associates with the 80S ribosome particle. Interacts (via the RRM domain) with NUDT21/CPSF5; this interaction is direct and enhances binding to RNA. Interacts (via Arg/Ser-rich domain) with FIP1L1 (preferentially via unphosphorylated form and Arg/Glu/Asp-rich domain); this interaction mediates, at least in part, the interaction between the CFIm and CPSF complexes and may be inhibited by CPSF6 hyper-phosphorylation. Interacts (via N-terminus) with NXF1; this interaction is direct. Interacts with SRSF3. Interacts with SRSF7. Interacts with SNRNP70. Interacts with TRA2B/SFRS10. Interacts with UPF1. Interacts with UPF3B. Interacts with VIRMA. Interacts (via Arg/Ser-rich domain) with TNPO3; promoting nuclear import of CPSF6 independently of its phosphorylation status. Interacts with YTHDC1. Phosphorylated. Phosphorylated in the Arg/Ser-rich domain by SRPK1, in vitro. Post-translationally, symmetrically dimethylated on arginine residues in the GAR motif by PRMT5 in a WDR77- and CLNS1A-dependent manner. Asymmetrically dimethylated on arginine residues in the GAR motif by PRMT1.

The protein localises to the nucleus. It is found in the nucleoplasm. Its subcellular location is the nucleus speckle. It localises to the cytoplasm. Component of the cleavage factor Im (CFIm) complex that functions as an activator of the pre-mRNA 3'-end cleavage and polyadenylation processing required for the maturation of pre-mRNA into functional mRNAs. CFIm contributes to the recruitment of multiprotein complexes on specific sequences on the pre-mRNA 3'-end, so called cleavage and polyadenylation signals (pA signals). Most pre-mRNAs contain multiple pA signals, resulting in alternative cleavage and polyadenylation (APA) producing mRNAs with variable 3'-end formation. The CFIm complex acts as a key regulator of cleavage and polyadenylation site choice during APA through its binding to 5'-UGUA-3' elements localized in the 3'-untranslated region (UTR) for a huge number of pre-mRNAs. CPSF6 enhances NUDT21/CPSF5 binding to 5'-UGUA-3' elements localized upstream of pA signals and promotes RNA looping, and hence activates directly the mRNA 3'-processing machinery. Plays a role in mRNA export. The sequence is that of Cleavage and polyadenylation specificity factor subunit 6 from Bos taurus (Bovine).